The primary structure comprises 412 residues: Imidazolonepropionase (412 aa).

Residues H76 and H78 each contribute to the Fe(3+) site. Zn(2+) contacts are provided by H76 and H78. Residues R85, Y148, and H181 each coordinate 4-imidazolone-5-propanoate. Y148 contributes to the N-formimidoyl-L-glutamate binding site. H242 is a Fe(3+) binding site. Residue H242 coordinates Zn(2+). Residue E245 coordinates 4-imidazolone-5-propanoate. D317 is a binding site for Fe(3+). Position 317 (D317) interacts with Zn(2+). Positions 319 and 321 each coordinate N-formimidoyl-L-glutamate. A 4-imidazolone-5-propanoate-binding site is contributed by S322.

Belongs to the metallo-dependent hydrolases superfamily. HutI family. The cofactor is Zn(2+). Fe(3+) is required as a cofactor.

It is found in the cytoplasm. The catalysed reaction is 4-imidazolone-5-propanoate + H2O = N-formimidoyl-L-glutamate. Its pathway is amino-acid degradation; L-histidine degradation into L-glutamate; N-formimidoyl-L-glutamate from L-histidine: step 3/3. Functionally, catalyzes the hydrolytic cleavage of the carbon-nitrogen bond in imidazolone-5-propanoate to yield N-formimidoyl-L-glutamate. It is the third step in the universal histidine degradation pathway. The sequence is that of Imidazolonepropionase from Staphylococcus aureus (strain USA300 / TCH1516).